The following is a 394-amino-acid chain: Ornithine aminotransferase 1 (394 aa).

An N6-(pyridoxal phosphate)lysine modification is found at K252.

Belongs to the class-III pyridoxal-phosphate-dependent aminotransferase family. OAT subfamily. It depends on pyridoxal 5'-phosphate as a cofactor.

It localises to the cytoplasm. It carries out the reaction a 2-oxocarboxylate + L-ornithine = L-glutamate 5-semialdehyde + an L-alpha-amino acid. The protein operates within amino-acid biosynthesis; L-proline biosynthesis; L-glutamate 5-semialdehyde from L-ornithine: step 1/1. In terms of biological role, catalyzes the interconversion of ornithine to glutamate semialdehyde. The polypeptide is Ornithine aminotransferase 1 (Staphylococcus aureus (strain COL)).